A 387-amino-acid polypeptide reads, in one-letter code: Phosphoglycerate kinase (387 aa).

Substrate is bound by residues 21 to 23 (DLN), R36, 59 to 62 (HLGR), R113, and R146. ATP-binding positions include K197, E314, and 340 to 343 (GGDT).

Belongs to the phosphoglycerate kinase family. In terms of assembly, monomer.

It localises to the cytoplasm. It catalyses the reaction (2R)-3-phosphoglycerate + ATP = (2R)-3-phospho-glyceroyl phosphate + ADP. The protein operates within carbohydrate degradation; glycolysis; pyruvate from D-glyceraldehyde 3-phosphate: step 2/5. The polypeptide is Phosphoglycerate kinase (Salmonella schwarzengrund (strain CVM19633)).